The chain runs to 108 residues: CRISPR-associated endoribonuclease Cas2 (108 aa).

Residue Asp15 coordinates Mg(2+).

The protein belongs to the CRISPR-associated endoribonuclease Cas2 protein family. As to quaternary structure, homodimer, forms a heterotetramer with a Cas1 homodimer. It depends on Mg(2+) as a cofactor.

In terms of biological role, CRISPR (clustered regularly interspaced short palindromic repeat), is an adaptive immune system that provides protection against mobile genetic elements (viruses, transposable elements and conjugative plasmids). CRISPR clusters contain sequences complementary to antecedent mobile elements and target invading nucleic acids. CRISPR clusters are transcribed and processed into CRISPR RNA (crRNA). Functions as a ssRNA-specific endoribonuclease. Involved in the integration of spacer DNA into the CRISPR cassette. This chain is CRISPR-associated endoribonuclease Cas2, found in Paracidovorax avenae (strain ATCC 19860 / DSM 7227 / CCUG 15838 / JCM 20985 / LMG 2117 / NCPPB 1011) (Acidovorax avenae).